The primary structure comprises 315 residues: Protein-export membrane protein SecF (315 aa).

A run of 6 helical transmembrane segments spans residues 35 to 55 (MVLYPLVVFLVAALILAVHFP), 152 to 172 (QGIKAVIYAFIGMAIVVFLFF), 181 to 201 (IIFSAFSDMVIALATMGILGI), 205 to 225 (TATIAALLMLIGYTVDSNILL), 242 to 264 (LSAVSTGFTMSTTTLGALFILWL), and 282 to 302 (LLADFMNTWIFNAGVLRWYIA).

It belongs to the SecD/SecF family. SecF subfamily. As to quaternary structure, part of the protein translocation apparatus. Forms a complex with SecD.

It is found in the cell membrane. In terms of biological role, involved in protein export. The protein is Protein-export membrane protein SecF of Thermococcus gammatolerans (strain DSM 15229 / JCM 11827 / EJ3).